Here is a 325-residue protein sequence, read N- to C-terminus: MILSIESSCDDSAIAITEIATNRLLFHKKISQELEHSVYGGVVPELAARLHAEALPRILEECNPYFKDLKAVAVTTTPGLSVTLVEGVTMAKAISIALNIPIIGVNHLVGHIYSLFIEKESYFPLTVLLVSGGHTQVMEVKSFTEIKTVAKSMDDSFGESFDKVAKMMNLGYPGGPVIEALAKGGDRKRYNFTVPLFQSPLIAFSYSGLKNSVRLAVEAANEEDFKDIAASFEHIATAHIIQKLKKYFKEVPPKTFAIVGGASANLYLRSSIEELLKPHGADLLLSELKYCSDNAAMIGRVAVEMYKESLFSDLSSLEVCPKSVI.

2 residues coordinate Fe cation: His107 and His111. Residues 129–133, Asp162, Gly175, and Asn265 each bind substrate; that span reads LVSGG. Asp293 is a Fe cation binding site.

This sequence belongs to the KAE1 / TsaD family. The cofactor is Fe(2+).

The protein localises to the cytoplasm. The enzyme catalyses L-threonylcarbamoyladenylate + adenosine(37) in tRNA = N(6)-L-threonylcarbamoyladenosine(37) in tRNA + AMP + H(+). Its function is as follows. Required for the formation of a threonylcarbamoyl group on adenosine at position 37 (t(6)A37) in tRNAs that read codons beginning with adenine. Is involved in the transfer of the threonylcarbamoyl moiety of threonylcarbamoyl-AMP (TC-AMP) to the N6 group of A37, together with TsaE and TsaB. TsaD likely plays a direct catalytic role in this reaction. The polypeptide is tRNA N6-adenosine threonylcarbamoyltransferase (Sulfurimonas denitrificans (strain ATCC 33889 / DSM 1251) (Thiomicrospira denitrificans (strain ATCC 33889 / DSM 1251))).